Here is a 144-residue protein sequence, read N- to C-terminus: uncharacterized protein (144 aa).

Positions 90–144 are disordered; the sequence is KKEYSALKKSGKIHKVGGSKSSGHRKTKKPKKSMKGGSKTKKLSEKQLMKELLAM. A compositionally biased stretch (basic residues) spans 98–130; it reads KSGKIHKVGGSKSSGHRKTKKPKKSMKGGSKTK.

This is an uncharacterized protein from Sputnik virophage.